Here is a 403-residue protein sequence, read N- to C-terminus: Alkaline protease 1 (403 aa).

The first 21 residues, 1 to 21, serve as a signal peptide directing secretion; sequence MHSFKRSLLLLGALLPAVFGA. Residues 22-124 constitute a propeptide that is removed on maturation; it reads PVEPRRAAEK…QIWYIDALTS (103 aa). The region spanning 35–119 is the Inhibitor I9 domain; that stretch reads KYIVTFKSGL…HVEEDQIWYI (85 aa). A Peptidase S8 domain is found at 129–403; it reads PWGLGAISHK…NLLAYNGADE (275 aa). Active-site charge relay system residues include D161 and H192. A glycan (N-linked (GlcNAc...) asparagine) is linked at N252. S348 functions as the Charge relay system in the catalytic mechanism.

It belongs to the peptidase S8 family.

The protein resides in the secreted. The enzyme catalyses Hydrolysis of proteins with broad specificity, and of Bz-Arg-OEt &gt; Ac-Tyr-OEt. Does not hydrolyze peptide amides.. Its function is as follows. Secreted alkaline protease that allows assimilation of proteinaceous substrates. The protein is Alkaline protease 1 (alp1) of Emericella nidulans (strain FGSC A4 / ATCC 38163 / CBS 112.46 / NRRL 194 / M139) (Aspergillus nidulans).